We begin with the raw amino-acid sequence, 133 residues long: ATP synthase epsilon chain (133 aa).

Belongs to the ATPase epsilon chain family. In terms of assembly, F-type ATPases have 2 components, CF(1) - the catalytic core - and CF(0) - the membrane proton channel. CF(1) has five subunits: alpha(3), beta(3), gamma(1), delta(1), epsilon(1). CF(0) has three main subunits: a, b and c.

It is found in the cellular thylakoid membrane. In terms of biological role, produces ATP from ADP in the presence of a proton gradient across the membrane. The chain is ATP synthase epsilon chain from Prochlorococcus marinus (strain MIT 9303).